We begin with the raw amino-acid sequence, 213 residues long: High frequency lysogenization protein HflD homolog (213 aa).

A coiled-coil region spans residues 79–126 (QGLNAELTRYTLSLMVLERKLSSAKGALDTLGNRINGLQRQLEHFDLQ).

It belongs to the HflD family.

The protein resides in the cytoplasm. It is found in the cell inner membrane. This chain is High frequency lysogenization protein HflD homolog, found in Shigella dysenteriae serotype 1 (strain Sd197).